A 1407-amino-acid polypeptide reads, in one-letter code: YEATS domain-containing protein 2 (1407 aa).

K9 participates in a covalent cross-link: Glycyl lysine isopeptide (Lys-Gly) (interchain with G-Cter in SUMO2). A coiled-coil region spans residues 54-80 (MKNKEHEIDVIDQRLIEARRMMDKLRA). A Glycyl lysine isopeptide (Lys-Gly) (interchain with G-Cter in SUMO2) cross-link involves residue K113. The interval 116 to 196 (LESPSRSSSP…SHKRELRNAD (81 aa)) is disordered. A phosphoserine mark is found at S118, S120, and S157. A compositionally biased stretch (polar residues) spans 119-148 (PSRSSSPTNQRSETPSANHSESDSLSQHND). Basic and acidic residues predominate over residues 149-165 (FLSDKDNNSNVDVEERP). Residue K189 forms a Glycyl lysine isopeptide (Lys-Gly) (interchain with G-Cter in SUMO2) linkage. In terms of domain architecture, YEATS spans 201 to 346 (ETSRLFVKKT…EDSVYPQSSE (146 aa)). 2 histone H3K27cr binding regions span residues 260–262 (HPS) and 283–285 (WGE). T406 bears the Phosphothreonine mark. 5 positions are modified to phosphoserine: S446, S462, S464, S470, and S472. Positions 462 to 540 (SGSPISTPSP…GTGSPIPKIH (79 aa)) are disordered. T477 carries the post-translational modification Phosphothreonine. A Glycyl lysine isopeptide (Lys-Gly) (interchain with G-Cter in SUMO2) cross-link involves residue K486. The segment covering 511 to 520 (STPSTGSPTS) has biased composition (low complexity). S534 carries the post-translational modification Phosphoserine. K550 is covalently cross-linked (Glycyl lysine isopeptide (Lys-Gly) (interchain with G-Cter in SUMO2)). The residue at position 573 (S573) is a Phosphoserine. Residue K590 forms a Glycyl lysine isopeptide (Lys-Gly) (interchain with G-Cter in SUMO2) linkage. At S625 the chain carries Phosphoserine. Residues K647 and K771 each participate in a glycyl lysine isopeptide (Lys-Gly) (interchain with G-Cter in SUMO2) cross-link. The disordered stretch occupies residues 791–833 (SGSAAAGGSGSSGAGGGSGGGGGSGAGGTPSTSGPGGGPQHLT). Residues 795 to 829 (AAGGSGSSGAGGGSGGGGGSGAGGTPSTSGPGGGP) show a composition bias toward gly residues. K908 is covalently cross-linked (Glycyl lysine isopeptide (Lys-Gly) (interchain with G-Cter in SUMO2)). K1095 participates in a covalent cross-link: Glycyl lysine isopeptide (Lys-Gly) (interchain with G-Cter in SUMO1); alternate. Residue K1095 forms a Glycyl lysine isopeptide (Lys-Gly) (interchain with G-Cter in SUMO2); alternate linkage. K1115 participates in a covalent cross-link: Glycyl lysine isopeptide (Lys-Gly) (interchain with G-Cter in SUMO2). T1204 is subject to Phosphothreonine. Residues K1207 and K1270 each participate in a glycyl lysine isopeptide (Lys-Gly) (interchain with G-Cter in SUMO2) cross-link.

In terms of assembly, component of the ADA2A-containing complex (ATAC), composed of KAT14, KAT2A, TADA2L, TADA3L, ZZ3, MBIP, WDR5, YEATS2, SGF29 and DR1.

The protein resides in the nucleus. Its function is as follows. Chromatin reader component of the ATAC complex, a complex with histone acetyltransferase activity on histones H3 and H4. YEATS2 specifically recognizes and binds histone H3 crotonylated at 'Lys-27' (H3K27cr). Crotonylation marks active promoters and enhancers and confers resistance to transcriptional repressors. The chain is YEATS domain-containing protein 2 from Mus musculus (Mouse).